A 500-amino-acid polypeptide reads, in one-letter code: NAD(P)H-quinone oxidoreductase chain 4, chloroplastic (500 aa).

15 helical membrane passes run 4–24 (FPWL…IFFL), 35–55 (YTIF…CYHF), 87–107 (IGPI…AWPV), 113–130 (LFNF…GLFS), 134–154 (LLLF…LLSM), 167–187 (FILY…GIGL), 211–231 (IIFY…IPLH), 242–262 (HYST…YGLV), 272–292 (AHSI…IYAA), 305–325 (IAYS…SITD), 330–350 (GALL…FLAG), 364–384 (MGGI…FSMA), 386–406 (LALP…GIIT), 416–436 (ILIT…SLSM), and 463–483 (FLSI…DFIF).

It belongs to the complex I subunit 4 family.

Its subcellular location is the plastid. The protein localises to the chloroplast thylakoid membrane. It carries out the reaction a plastoquinone + NADH + (n+1) H(+)(in) = a plastoquinol + NAD(+) + n H(+)(out). The catalysed reaction is a plastoquinone + NADPH + (n+1) H(+)(in) = a plastoquinol + NADP(+) + n H(+)(out). This chain is NAD(P)H-quinone oxidoreductase chain 4, chloroplastic, found in Coffea arabica (Arabian coffee).